A 379-amino-acid polypeptide reads, in one-letter code: MKILRKNHPLLKIVNHSFIDLPTPSNISSWWNFGSLLGMCLVIQILTGLFLAMHYTSDTTTAFSSVAHICRDVNYGWLIRYLHANGASMFFICLFIHVGRGIYYGSYVLSETWNIGIILLLTTMATAFVGYVLPWGQMSFWGATVITNLLSAIPYIGNTLVEWIWGGFSVDKATLTRFFAFHFILPFIIAAFALVHLLFLHETGSNNPSGLNSDSDKIPFHPYYTTKDLLGIFLLLLVLMILALFFPDVLGDPDNFTPANPLNTPAHIKPEWYFLFAYAILRSIPNKLGGVLALVLSILILAAFPLLNTSKQHGLIFRPVTQVIYWIFIANLLVLTWIGGQPVEYPFTTIGQIASVTYFATIIILIPVSNTIENNIIKL.

4 consecutive transmembrane segments (helical) span residues 33–53 (FGSL…FLAM), 77–98 (WLIR…FIHV), 113–133 (WNIG…GYVL), and 178–198 (FFAF…VHLL). Heme b contacts are provided by His83 and His97. Residues His182 and His196 each contribute to the heme b site. A ubiquinone is bound at residue His201. The next 4 helical transmembrane spans lie at 226 to 246 (TKDL…ALFF), 288 to 308 (LGGV…PLLN), 320 to 340 (VTQV…WIGG), and 347 to 367 (FTTI…ILIP).

It belongs to the cytochrome b family. The cytochrome bc1 complex contains 11 subunits: 3 respiratory subunits (MT-CYB, CYC1 and UQCRFS1), 2 core proteins (UQCRC1 and UQCRC2) and 6 low-molecular weight proteins (UQCRH/QCR6, UQCRB/QCR7, UQCRQ/QCR8, UQCR10/QCR9, UQCR11/QCR10 and a cleavage product of UQCRFS1). This cytochrome bc1 complex then forms a dimer. It depends on heme b as a cofactor.

It localises to the mitochondrion inner membrane. In terms of biological role, component of the ubiquinol-cytochrome c reductase complex (complex III or cytochrome b-c1 complex) that is part of the mitochondrial respiratory chain. The b-c1 complex mediates electron transfer from ubiquinol to cytochrome c. Contributes to the generation of a proton gradient across the mitochondrial membrane that is then used for ATP synthesis. In Akodon montensis (Montane grass mouse), this protein is Cytochrome b (MT-CYB).